The primary structure comprises 656 residues: Membrane-associated tyrosine- and threonine-specific cdc2-inhibitory kinase wee-1.3 (656 aa).

A compositionally biased stretch (polar residues) spans 1–11; the sequence is MDETENNTSID. Positions 1–24 are disordered; it reads MDETENNTSIDSVEVGPSSPRVVA. The Protein kinase domain occupies 107 to 354; it reads FQIDEIIGRG…SDALRKHLSI (248 aa). Residues 113–121 and Lys136 each bind ATP; that span reads IGRGSFGEV. Asp227 serves as the catalytic Proton acceptor. Asn232 and Asp245 together coordinate Mg(2+). Disordered stretches follow at residues 449–552 and 617–656; these read PFDF…NSSI and KGKE…GDEN. Residues 486–505 are compositionally biased toward polar residues; sequence ATCSSSNSSAIETAEDSLSS. Residues 617–631 show a composition bias toward basic and acidic residues; the sequence is KGKEKPVVEPAELRQ. Positions 646–656 are enriched in polar residues; it reads ASFQGSSGDEN.

Belongs to the protein kinase superfamily. Ser/Thr protein kinase family. WEE1 subfamily.

The protein localises to the golgi apparatus membrane. Its subcellular location is the cytoplasm. It carries out the reaction L-seryl-[protein] + ATP = O-phospho-L-seryl-[protein] + ADP + H(+). The catalysed reaction is L-threonyl-[protein] + ATP = O-phospho-L-threonyl-[protein] + ADP + H(+). Acts as a negative regulator of entry into mitosis (G2 to M transition) by phosphorylation of the CDK1 kinase during oocyte maturation. Required for embryonic development, germline proliferation and initiation of meiosis during spermatogenesis. Required for chromosome structure during mitosis and negative regulation of nuclear envelope breakdown. This chain is Membrane-associated tyrosine- and threonine-specific cdc2-inhibitory kinase wee-1.3, found in Caenorhabditis briggsae.